The following is a 73-amino-acid chain: Defensin-like protein 87 (73 aa).

Residues 1–27 form the signal peptide; sequence MTTKKTSSVVLPLLLVFALILMPMVAG. 3 disulfides stabilise this stretch: Cys-33-Cys-71, Cys-45-Cys-69, and Cys-49-Cys-70.

Belongs to the DEFL family.

The protein localises to the secreted. The protein is Defensin-like protein 87 of Arabidopsis thaliana (Mouse-ear cress).